We begin with the raw amino-acid sequence, 316 residues long: Olfactory receptor 4N4 (316 aa).

Topologically, residues 1-25 (MKIANNTVVTEFILLGLTQSQDIQL) are extracellular. Asparagine 5 is a glycosylation site (N-linked (GlcNAc...) asparagine). The helical transmembrane segment at 26 to 49 (LVFVLILIFYLIILPGNFLIIFTI) threads the bilayer. Topologically, residues 50-57 (RSDPGLTA) are cytoplasmic. Residues 58–79 (PLYLFLGNLAFLDASYSFIVAP) form a helical membrane-spanning segment. Residues 80–100 (RMLVDFLSEKKVISYRGCITQ) are Extracellular-facing. A disulfide bridge connects residues cysteine 97 and cysteine 189. Residues 101-120 (LFFLHFLGGGEGLLLVVMAF) traverse the membrane as a helical segment. At 121-139 (DRYIAICRPLHCSTVMNPR) the chain is on the cytoplasmic side. Residues 140–158 (ACYAMMLALWLGGFVHSII) traverse the membrane as a helical segment. Topologically, residues 159-195 (QVVLILRLPFCGPNQLDNFFCDVRQVIKLACTDMFVV) are extracellular. The helical transmembrane segment at 196–219 (ELLMVFNSGLMTLLCFLGLLASYA) threads the bilayer. Residues 220 to 235 (VILCHVRRAASEGKNK) are Cytoplasmic-facing. Residues 236-258 (AMSTCTTRVIIILLMFGPAIFIY) traverse the membrane as a helical segment. Topologically, residues 259 to 269 (MCPFRALPADK) are extracellular. A helical transmembrane segment spans residues 270 to 289 (MVSLFHTVIFPLMNPMIYTL). Over 290 to 316 (RNQEVKTSMKRLLSRHVVCQVDFIIRN) the chain is Cytoplasmic.

It belongs to the G-protein coupled receptor 1 family.

The protein resides in the cell membrane. In terms of biological role, odorant receptor. The polypeptide is Olfactory receptor 4N4 (OR4N4) (Homo sapiens (Human)).